Reading from the N-terminus, the 207-residue chain is Small ribosomal subunit protein uS4 (207 aa).

One can recognise an S4 RNA-binding domain in the interval 96–159 (RRLDNVVYRL…RASTFIADNI (64 aa)).

This sequence belongs to the universal ribosomal protein uS4 family. As to quaternary structure, part of the 30S ribosomal subunit. Contacts protein S5. The interaction surface between S4 and S5 is involved in control of translational fidelity.

Its function is as follows. One of the primary rRNA binding proteins, it binds directly to 16S rRNA where it nucleates assembly of the body of the 30S subunit. With S5 and S12 plays an important role in translational accuracy. The polypeptide is Small ribosomal subunit protein uS4 (Leptospira borgpetersenii serovar Hardjo-bovis (strain JB197)).